The chain runs to 292 residues: Recombination-promoting nuclease RpnA (292 aa).

Belongs to the Rpn/YhgA-like nuclease family. The cofactor is Mg(2+).

Its activity is regulated as follows. Inhibited by EDTA, Zn(2+) and by Mg(2+) plus Mn(2+); stimulated by Ca(2+) in the presence of Mg(2+). In terms of biological role, a low activity DNA endonuclease yielding 3'-hydroxyl ends, equally active on ss or dsDNA, not active on dsRNA. Shows no sequence specificity. Upon expression enhances RecA-independent DNA recombination 49-fold, concomitantly reducing viability by 88% and probably inducing DNA damage as measured by induction of the SOS repair response in RecA cells. RecA-independent DNA recombination leads to replacement of recipient genes with large segments of donor DNA rather than DNA addition to the donor strain; increased expression of RpnA leads to smaller replacement segments, suggesting this protein may play a role in generating crossover events. This chain is Recombination-promoting nuclease RpnA, found in Escherichia coli (strain K12).